Reading from the N-terminus, the 504-residue chain is Sodium-coupled neutral amino acid transporter 3 (504 aa).

Asn-74 carries N-linked (GlcNAc...) asparagine glycosylation. Transmembrane regions (helical) follow at residues 83 to 103 (GILGLAYAMANTGIILFLFLL), 106 to 126 (VALLSSYSIHLLLKSSGVVGI), 144 to 164 (AAALAITLQNIGAMSSYLYII), 187 to 207 (MNGNYLVILVSVTIILPLALM), and 213 to 233 (LGYSSGFSLSCMVFFLIAVIY). A disulfide bond links Cys-240 and Cys-275. 4 N-linked (GlcNAc...) asparagine glycosylation sites follow: Asn-247, Asn-248, Asn-252, and Asn-323. Transmembrane regions (helical) follow at residues 324–344 (LSIAVMYIMYFLAALFGYLTF), 366–386 (ILCVRVAVLTAVTLTVPIVLF), 408–428 (VLIAVGLLTCINLLVIFAPNI), 431–451 (IFGVIGATSAPFLIFIFPAIF), and 471–491 (ALCFAMLGFLLMTMSLSFIII).

The protein belongs to the amino acid/polyamine transporter 2 family.

Its subcellular location is the cell membrane. It is found in the basolateral cell membrane. The enzyme catalyses L-glutamine(out) + Na(+)(out) + H(+)(in) = L-glutamine(in) + Na(+)(in) + H(+)(out). It carries out the reaction L-asparagine(out) + Na(+)(out) + H(+)(in) = L-asparagine(in) + Na(+)(in) + H(+)(out). It catalyses the reaction L-histidine(out) + Na(+)(out) + H(+)(in) = L-histidine(in) + Na(+)(in) + H(+)(out). In terms of biological role, symporter that cotransports specific neutral amino acids and sodium ions, coupled to an H(+) antiporter activity. Mainly participates in the glutamate-GABA-glutamine cycle in brain where it transports L-glutamine from astrocytes in the intercellular space for the replenishment of both neurotransmitters glutamate and gamma-aminobutyric acid (GABA) in neurons and also functions as the major influx transporter in ganglion cells mediating the uptake of glutamine. The transport activity is specific for L-glutamine, L-histidine and L-asparagine. The transport is electroneutral coupled to the cotransport of 1 Na(+) and the antiport of 1 H(+). The transport is pH dependent, saturable, Li(+) tolerant and functions in both direction depending on the concentration gradients of its substrates and cotransported ions. Also mediates an amino acid-gated H(+) conductance that is not stoichiometrically coupled to the amino acid transport but which influences the ionic gradients that drive the amino acid transport. In addition, may play a role in nitrogen metabolism, amino acid homeostasis, glucose metabolism and renal ammoniagenesis. In Homo sapiens (Human), this protein is Sodium-coupled neutral amino acid transporter 3.